Consider the following 135-residue polypeptide: Large ribosomal subunit protein uL16c (135 aa).

It belongs to the universal ribosomal protein uL16 family. Part of the 50S ribosomal subunit.

It localises to the plastid. The protein localises to the chloroplast. The protein is Large ribosomal subunit protein uL16c of Cucumis sativus (Cucumber).